We begin with the raw amino-acid sequence, 249 residues long: Type III pantothenate kinase (249 aa).

Residue 6-13 (DCGNSFIK) participates in ATP binding. Substrate contacts are provided by residues Y93 and 100–103 (GLDR). D102 serves as the catalytic Proton acceptor. Position 122 (D122) interacts with K(+). T125 serves as a coordination point for ATP. Substrate is bound at residue T181.

Belongs to the type III pantothenate kinase family. In terms of assembly, homodimer. NH4(+) serves as cofactor. The cofactor is K(+).

It is found in the cytoplasm. The enzyme catalyses (R)-pantothenate + ATP = (R)-4'-phosphopantothenate + ADP + H(+). It participates in cofactor biosynthesis; coenzyme A biosynthesis; CoA from (R)-pantothenate: step 1/5. Catalyzes the phosphorylation of pantothenate (Pan), the first step in CoA biosynthesis. The polypeptide is Type III pantothenate kinase (Pseudomonas fluorescens (strain SBW25)).